The primary structure comprises 660 residues: Probable serine/threonine-protein kinase CE0033 (660 aa).

The region spanning 9–278 is the Protein kinase domain; the sequence is YELGASIGSG…AEMAADLELL (270 aa). Residues 15-23 and K38 contribute to the ATP site; that span reads IGSGGMSEV. The active-site Proton acceptor is D136. Residues 288–319 form a disordered region; that stretch reads RAHVEKPDEPETVVVPQRLSTPPPPPTPAMPA. 3 PASTA domains span residues 377-443, 444-512, and 513-577; these read SAST…TISS, GREV…TVST, and GPSL…EISN.

This sequence belongs to the protein kinase superfamily. Ser/Thr protein kinase family.

It catalyses the reaction L-seryl-[protein] + ATP = O-phospho-L-seryl-[protein] + ADP + H(+). The enzyme catalyses L-threonyl-[protein] + ATP = O-phospho-L-threonyl-[protein] + ADP + H(+). In Corynebacterium efficiens (strain DSM 44549 / YS-314 / AJ 12310 / JCM 11189 / NBRC 100395), this protein is Probable serine/threonine-protein kinase CE0033.